The primary structure comprises 827 residues: Stage II sporulation protein E (827 aa).

10 consecutive transmembrane segments (helical) span residues 49 to 69 (IGFLLGRAFILSEVLPFALPF), 71 to 91 (GAMLLIRRDKAFYAVLAVLAG), 116 to 136 (VAAFITDDRVKALPIVVFFSM), 142 to 162 (GFVYAQNGVFTTYDYVMAIVE), 175 to 195 (QSLPIFTVKKVKQSLKIEEII), 206 to 226 (TGLAGLSYQGMQAEHILARYV), 247 to 267 (GLILGLANIGNLYQMSLLAFS), 269 to 289 (LLGGLLKEGKKAGAAIGLIVG), 299 to 319 (GSAGLMTTLYESLIAVCLFLL), and 320 to 340 (TPQSITRKVARYIPGTVEHLQ). The Cytoplasmic portion of the chain corresponds to 341 to 827 (EQQQYARKIR…AIFQNKQEIS (487 aa)). Residues 594–804 (STGAAHAAKG…DDMTVVVVRI (211 aa)) enclose the PPM-type phosphatase domain.

Mn(2+) serves as cofactor.

It localises to the cell membrane. It catalyses the reaction O-phospho-L-seryl-[protein] + H2O = L-seryl-[protein] + phosphate. It carries out the reaction O-phospho-L-threonyl-[protein] + H2O = L-threonyl-[protein] + phosphate. Functionally, normally needed for pro-sigma E processing during sporulation but can be bypassed in vegetative cells. Activates SpoIIAA by dephosphorylation. This is Stage II sporulation protein E (spoIIE) from Bacillus subtilis (strain 168).